The following is a 355-amino-acid chain: Methylthioribose-1-phosphate isomerase (355 aa).

Residues 52–54, Arg95, and Gln204 contribute to the substrate site; that span reads RGA. Catalysis depends on Asp245, which acts as the Proton donor. 255 to 256 provides a ligand contact to substrate; it reads NK.

Belongs to the eIF-2B alpha/beta/delta subunits family. MtnA subfamily.

It carries out the reaction 5-(methylsulfanyl)-alpha-D-ribose 1-phosphate = 5-(methylsulfanyl)-D-ribulose 1-phosphate. It participates in amino-acid biosynthesis; L-methionine biosynthesis via salvage pathway; L-methionine from S-methyl-5-thio-alpha-D-ribose 1-phosphate: step 1/6. Catalyzes the interconversion of methylthioribose-1-phosphate (MTR-1-P) into methylthioribulose-1-phosphate (MTRu-1-P). In Acaryochloris marina (strain MBIC 11017), this protein is Methylthioribose-1-phosphate isomerase.